Reading from the N-terminus, the 477-residue chain is Adenosylhomocysteinase (477 aa).

Positions 63, 142, and 202 each coordinate substrate. 203-205 (TTT) lines the NAD(+) pocket. Substrate contacts are provided by K232 and D236. NAD(+) is bound by residues N237, 266–271 (GYGDVG), E289, N324, 345–347 (IGH), and N390.

Belongs to the adenosylhomocysteinase family. NAD(+) is required as a cofactor.

Its subcellular location is the cytoplasm. The catalysed reaction is S-adenosyl-L-homocysteine + H2O = L-homocysteine + adenosine. The protein operates within amino-acid biosynthesis; L-homocysteine biosynthesis; L-homocysteine from S-adenosyl-L-homocysteine: step 1/1. May play a key role in the regulation of the intracellular concentration of adenosylhomocysteine. This chain is Adenosylhomocysteinase, found in Leptothrix cholodnii (strain ATCC 51168 / LMG 8142 / SP-6) (Leptothrix discophora (strain SP-6)).